The primary structure comprises 321 residues: Phospho-N-acetylmuramoyl-pentapeptide-transferase (321 aa).

The next 10 membrane-spanning stretches (helical) occupy residues 1–21 (MIFV…PVLI), 50–70 (MGGL…IIFV), 76–96 (IILL…DDYI), 112–132 (FLAQ…FHLV), 140–160 (IPFT…IVFL), 176–196 (GLAT…SFVL), 200–220 (AIGI…PYNI), 225–245 (VFMG…ISIM), 250–270 (LSLI…MLQV), and 300–320 (VVTV…WIGV).

This sequence belongs to the glycosyltransferase 4 family. MraY subfamily. Mg(2+) is required as a cofactor.

Its subcellular location is the cell membrane. It catalyses the reaction UDP-N-acetyl-alpha-D-muramoyl-L-alanyl-gamma-D-glutamyl-L-lysyl-D-alanyl-D-alanine + di-trans,octa-cis-undecaprenyl phosphate = Mur2Ac(oyl-L-Ala-gamma-D-Glu-L-Lys-D-Ala-D-Ala)-di-trans,octa-cis-undecaprenyl diphosphate + UMP. It participates in cell wall biogenesis; peptidoglycan biosynthesis. Functionally, catalyzes the initial step of the lipid cycle reactions in the biosynthesis of the cell wall peptidoglycan: transfers peptidoglycan precursor phospho-MurNAc-pentapeptide from UDP-MurNAc-pentapeptide onto the lipid carrier undecaprenyl phosphate, yielding undecaprenyl-pyrophosphoryl-MurNAc-pentapeptide, known as lipid I. In Staphylococcus aureus (strain bovine RF122 / ET3-1), this protein is Phospho-N-acetylmuramoyl-pentapeptide-transferase.